Reading from the N-terminus, the 39-residue chain is Photosystem II reaction center protein Y (39 aa).

The chain crosses the membrane as a helical span at residues 4–24 (RVIVVVSPLLIAATWAAINIG).

Belongs to the PsbY family. As to quaternary structure, PSII is composed of 1 copy each of membrane proteins PsbA, PsbB, PsbC, PsbD, PsbE, PsbF, PsbH, PsbI, PsbJ, PsbK, PsbL, PsbM, PsbT, PsbX, PsbY, PsbZ, Psb30/Ycf12, peripheral proteins PsbO, CyanoQ (PsbQ), PsbU, PsbV and a large number of cofactors. It forms dimeric complexes.

The protein resides in the cellular thylakoid membrane. In terms of biological role, loosely associated component of the core of photosystem II (PSII), it is not always seen in crystals. PSII is a light-driven water plastoquinone oxidoreductase, using light energy to abstract electrons from H(2)O, generating a proton gradient subsequently used for ATP formation. The polypeptide is Photosystem II reaction center protein Y (Synechocystis sp. (strain ATCC 27184 / PCC 6803 / Kazusa)).